Reading from the N-terminus, the 356-residue chain is Activating signal cointegrator 1 complex subunit 1 (356 aa).

Residues 1-52 are required for interaction with ASCC3; it reads MDVLRPQIVTFDGRNYRKNPIQEKQYQHEEDEDFYPDSMEYSDEPCGAYEVA. Positions 57 to 119 constitute a KH domain; sequence GFRATVSAPS…NGVVSARTRI (63 aa).

In terms of assembly, identified in the ASCC complex that contains ASCC1, ASCC2 and ASCC3. Interacts directly with ASCC3. The ASCC complex interacts with ALKBH3. Part of the ASC-1 complex, that contains TRIP4, ASCC1, ASCC2 and ASCC3. Interacts with CSRP1. Interacts with ZCCHC4. As to expression, expressed in the spinal cord, brain, paraspinal ganglia, thyroid, and submandibular glands.

The protein localises to the nucleus. Its subcellular location is the nucleus speckle. Plays a role in DNA damage repair as component of the ASCC complex. Part of the ASC-1 complex that enhances NF-kappa-B, SRF and AP1 transactivation. In cells responding to gastrin-activated paracrine signals, it is involved in the induction of SERPINB2 expression by gastrin. May also play a role in the development of neuromuscular junction. The sequence is that of Activating signal cointegrator 1 complex subunit 1 (Ascc1) from Mus musculus (Mouse).